Consider the following 97-residue polypeptide: Aspartyl/glutamyl-tRNA(Asn/Gln) amidotransferase subunit C (97 aa).

This sequence belongs to the GatC family. Heterotrimer of A, B and C subunits.

It catalyses the reaction L-glutamyl-tRNA(Gln) + L-glutamine + ATP + H2O = L-glutaminyl-tRNA(Gln) + L-glutamate + ADP + phosphate + H(+). It carries out the reaction L-aspartyl-tRNA(Asn) + L-glutamine + ATP + H2O = L-asparaginyl-tRNA(Asn) + L-glutamate + ADP + phosphate + 2 H(+). Functionally, allows the formation of correctly charged Asn-tRNA(Asn) or Gln-tRNA(Gln) through the transamidation of misacylated Asp-tRNA(Asn) or Glu-tRNA(Gln) in organisms which lack either or both of asparaginyl-tRNA or glutaminyl-tRNA synthetases. The reaction takes place in the presence of glutamine and ATP through an activated phospho-Asp-tRNA(Asn) or phospho-Glu-tRNA(Gln). The sequence is that of Aspartyl/glutamyl-tRNA(Asn/Gln) amidotransferase subunit C from Prochlorococcus marinus (strain AS9601).